A 180-amino-acid polypeptide reads, in one-letter code: Ribosome maturation factor RimM (180 aa).

The region spanning 104–177 is the PRC barrel domain; that stretch reads EGEFHLLDLV…WLLLTPPPGL (74 aa).

Belongs to the RimM family. Binds ribosomal protein uS19.

The protein localises to the cytoplasm. Its function is as follows. An accessory protein needed during the final step in the assembly of 30S ribosomal subunit, possibly for assembly of the head region. Essential for efficient processing of 16S rRNA. May be needed both before and after RbfA during the maturation of 16S rRNA. It has affinity for free ribosomal 30S subunits but not for 70S ribosomes. The chain is Ribosome maturation factor RimM from Synechococcus sp. (strain CC9902).